Consider the following 204-residue polypeptide: MKVKICGITDMETAKRACEYGADALGFVFAESKRKITPGLAKEIIQELPANVLKIGVFVNESVEVIQKITENCGLTHVQLHGDEDNHQIRRLNIPSIKALGVTSEIDMKNAQAYKTDYILFDSPKERFHGGNGKKFSWELLAHMSKELREKTILAGGLNALNIEEAIRTVRPYMVDVSSGVETEGKKDVEKIKQFIIKAKECSK.

Belongs to the TrpF family.

It catalyses the reaction N-(5-phospho-beta-D-ribosyl)anthranilate = 1-(2-carboxyphenylamino)-1-deoxy-D-ribulose 5-phosphate. The protein operates within amino-acid biosynthesis; L-tryptophan biosynthesis; L-tryptophan from chorismate: step 3/5. The protein is N-(5'-phosphoribosyl)anthranilate isomerase of Bacillus cereus (strain Q1).